We begin with the raw amino-acid sequence, 104 residues long: L-rhamnose mutarotase (104 aa).

A substrate-binding site is contributed by Tyr18. His22 functions as the Proton donor in the catalytic mechanism. Substrate contacts are provided by residues Tyr41 and 76–77 (WW).

It belongs to the rhamnose mutarotase family. As to quaternary structure, homodimer.

The protein localises to the cytoplasm. It carries out the reaction alpha-L-rhamnose = beta-L-rhamnose. The protein operates within carbohydrate metabolism; L-rhamnose metabolism. In terms of biological role, involved in the anomeric conversion of L-rhamnose. This is L-rhamnose mutarotase from Shigella sonnei (strain Ss046).